The primary structure comprises 377 residues: NADH dehydrogenase [ubiquinone] 1 alpha subcomplex subunit 9, mitochondrial (377 aa).

Residues 1 to 35 (MAAAVRFRVVRALPMSRPAITAAATSVFCGSSHRQ) constitute a mitochondrion transit peptide. Residue Lys175 is modified to N6-succinyllysine. Residues Lys189 and Lys370 each carry the N6-acetyllysine modification.

Belongs to the complex I NDUFA9 subunit family. As to quaternary structure, complex I is composed of 45 different subunits. This a component of the hydrophobic protein fraction. Interacts with BLOC1S1. Interacts with SLC2A4. Interacts with CLOCK. Interacts with RAB5IF. It depends on FAD as a cofactor. In terms of processing, acetylated on lysine residues. BLOC1S1 is required for acetylation. Acetylated by CLOCK in a circadian manner.

The protein resides in the mitochondrion matrix. Its function is as follows. Accessory subunit of the mitochondrial membrane respiratory chain NADH dehydrogenase (Complex I), that is believed not to be involved in catalysis. Complex I functions in the transfer of electrons from NADH to the respiratory chain. The immediate electron acceptor for the enzyme is believed to be ubiquinone. The chain is NADH dehydrogenase [ubiquinone] 1 alpha subcomplex subunit 9, mitochondrial (Ndufa9) from Mus musculus (Mouse).